The primary structure comprises 207 residues: MKPLTPRQAEVLELIKANMNETGMPPTRAEIAQKLGFKSANAAEEHLKALAKKGVIEIMPGTSRGIRLLLEEEEPLEESGLPLIGKVAAGEPILAQEHIESHYQVDPALFHPRADFLLRVQGMSMKNIGILDGDLLAVHKTQEVRNGQVVVARLDEDVTVKRFQRKGSQVWLLPENEELSPIEVDLSCQQLTIEGLAVGVIRNADWM.

The segment at residues 28 to 48 is a DNA-binding region (H-T-H motif); it reads RAEIAQKLGFKSANAAEEHLK. Active-site for autocatalytic cleavage activity residues include serine 124 and lysine 161.

The protein belongs to the peptidase S24 family. Homodimer.

It carries out the reaction Hydrolysis of Ala-|-Gly bond in repressor LexA.. Represses a number of genes involved in the response to DNA damage (SOS response), including recA and lexA. In the presence of single-stranded DNA, RecA interacts with LexA causing an autocatalytic cleavage which disrupts the DNA-binding part of LexA, leading to derepression of the SOS regulon and eventually DNA repair. This chain is LexA repressor, found in Aeromonas hydrophila subsp. hydrophila (strain ATCC 7966 / DSM 30187 / BCRC 13018 / CCUG 14551 / JCM 1027 / KCTC 2358 / NCIMB 9240 / NCTC 8049).